A 419-amino-acid chain; its full sequence is Endochitinase 2 (419 aa).

The N-terminal stretch at 1-18 is a signal peptide; the sequence is MHHLRALVGVGLAGLAAG. In terms of domain architecture, GH18 spans 35–343; the sequence is AQNVVYWGQN…QQAKSILVNG (309 aa). Residue asparagine 153 is glycosylated (N-linked (GlcNAc...) asparagine). Glutamate 173 acts as the Proton donor in catalysis. Asparagine 237 and asparagine 256 each carry an N-linked (GlcNAc...) asparagine glycan. A disordered region spans residues 343–390; sequence GAPCPSSGPPSSTPATAPAPTATTMPSSTSVSSPTASPTGGTVPQWGQ. The segment covering 355-384 has biased composition (low complexity); it reads TPATAPAPTATTMPSSTSVSSPTASPTGGT. One can recognise a CBM1 domain in the interval 383 to 419; sequence GTVPQWGQCGGEGYSGPTQCVPPYQCVKQGDWWSSCR.

This sequence belongs to the glycosyl hydrolase 18 family. Chitinase class III subfamily.

It is found in the secreted. It catalyses the reaction Random endo-hydrolysis of N-acetyl-beta-D-glucosaminide (1-&gt;4)-beta-linkages in chitin and chitodextrins.. Its function is as follows. Secreted chitinase involved in the degradation of chitin, a component of the cell walls of fungi and exoskeletal elements of some animals (including worms and arthropods). Participates in the infection process and directly acts in the penetration process of the host cuticle. This is Endochitinase 2 (chi2) from Metarhizium anisopliae (Entomophthora anisopliae).